Here is a 391-residue protein sequence, read N- to C-terminus: PPE family protein PPE18 (391 aa).

This sequence belongs to the mycobacterial PPE family. As to quaternary structure, interacts with human TLR2.

The protein resides in the secreted. It is found in the cell wall. Its subcellular location is the cell surface. Functionally, could be a crucial virulence factor for intracellular survival of M.tuberculosis. Favors development of Th2-type response, and down-regulates the pro-inflammatory and Th1-type response. Specifically interacts with the human Toll-like receptor 2 (TLR2), leading to an early and sustained activation of p38 MAPK, which induces IL-10 production and activates Th2-type immune response. Also inhibits pro-inflammatory cytokines IL-12p40 and TNF-alpha production. Acts by up-regulating the expression as well as tyrosine phosphorylation of suppressor of cytokine signaling 3 (SOCS-3), leading to the inhibition of phosphorylation of I-kappa-B-alpha, thereby preventing nuclear translocation of the NF-kappa-B/REL subunits and expression of NF-kappa-B regulated genes like IL-12 and TNF-alpha. Induction of SOCS-3 probably depends on the activation of p38 MAPK. The chain is PPE family protein PPE18 from Mycobacterium tuberculosis (strain ATCC 25618 / H37Rv).